Here is a 593-residue protein sequence, read N- to C-terminus: NADH-quinone oxidoreductase subunit C/D (593 aa).

An NADH dehydrogenase I subunit C region spans residues 1 to 184; that stretch reads MTADNAIFIP…DPYSLTLAKQ (184 aa). An NADH dehydrogenase I subunit D region spans residues 208 to 593; it reads DYMFLNLGPN…IDFVMADVDR (386 aa).

In the N-terminal section; belongs to the complex I 30 kDa subunit family. It in the C-terminal section; belongs to the complex I 49 kDa subunit family. In terms of assembly, NDH-1 is composed of 13 different subunits. Subunits NuoB, CD, E, F, and G constitute the peripheral sector of the complex.

Its subcellular location is the cell inner membrane. The catalysed reaction is a quinone + NADH + 5 H(+)(in) = a quinol + NAD(+) + 4 H(+)(out). In terms of biological role, NDH-1 shuttles electrons from NADH, via FMN and iron-sulfur (Fe-S) centers, to quinones in the respiratory chain. The immediate electron acceptor for the enzyme in this species is believed to be ubiquinone. Couples the redox reaction to proton translocation (for every two electrons transferred, four hydrogen ions are translocated across the cytoplasmic membrane), and thus conserves the redox energy in a proton gradient. The chain is NADH-quinone oxidoreductase subunit C/D from Pseudomonas putida (strain W619).